The chain runs to 315 residues: Alpha- and gamma-adaptin-binding protein p34 (315 aa).

A disordered region spans residues 197-233; sequence IGSADPCHPEQPHLPAADRTESLSDHRGGASNTTDAQ. The segment covering 203 to 224 has biased composition (basic and acidic residues); that stretch reads CHPEQPHLPAADRTESLSDHRG. Phosphoserine is present on residues Ser-310 and Ser-311.

Associated with AP-1 and AP-2 complexes.

Its subcellular location is the cytoplasm. The protein localises to the cytosol. May be involved in endocytic recycling of growth factor receptors such as EGFR. The protein is Alpha- and gamma-adaptin-binding protein p34 (AAGAB) of Pongo abelii (Sumatran orangutan).